A 456-amino-acid polypeptide reads, in one-letter code: DEAD-box ATP-dependent RNA helicase 10 (456 aa).

The Q motif signature appears at 9 to 37; the sequence is KTFAELGVREELVKACERLGWKNPSKIQA. In terms of domain architecture, Helicase ATP-binding spans 40–223; it reads LPFALEGKDV…RACLRNPVKI (184 aa). 53–60 contributes to the ATP binding site; it reads AQTGSGKT. The short motif at 171–174 is the DEAD box element; the sequence is DEAD. The 145-residue stretch at 250–394 folds into the Helicase C-terminal domain; sequence YLVYILSEMP…EYPAEEDEVL (145 aa). The segment at 407–456 is disordered; the sequence is SAMNMKESGGRKRRGEDDEESERFLGGNKDRGNKERGGNKDKKSSKKFKR. The segment covering 434 to 448 has biased composition (basic and acidic residues); the sequence is NKDRGNKERGGNKDK.

It belongs to the DEAD box helicase family. DDX47/RRP3 subfamily. As to expression, expressed in all tissues and organs examined including root, cotyledon, first and second leaves, third and fourth leaves, fifth and sixth leaves, shoot apex, flower, flower bud, cauline leaf and rosette leaves.

The protein localises to the nucleus. Its subcellular location is the nucleolus. The enzyme catalyses ATP + H2O = ADP + phosphate + H(+). Functionally, involved in leaf polarity establishment by functioning cooperatively with AS2 to repress abaxial genes ARF3, ARF4, KAN1, KAN2, YAB1 and YAB5, and the knox homeobox genes KNAT1, KNAT2, KNAT6, and STM to promote adaxial development in leaf primordia at shoot apical meristems at high temperatures. Involved in the processing of pre-rRNA intermediates at high temperatures. This is DEAD-box ATP-dependent RNA helicase 10 (RH10) from Arabidopsis thaliana (Mouse-ear cress).